The sequence spans 802 residues: Elongation factor G, mitochondrial (802 aa).

The N-terminal 24 residues, 1–24, are a transit peptide targeting the mitochondrion; that stretch reads MRCPSLARLPNRALSGLTRSPVRL. The tr-type G domain maps to 100 to 387; the sequence is SRLRNIGIAA…GVIDYLPNPS (288 aa). GTP contacts are provided by residues 109-116, 185-189, and 239-242; these read AHIDSGKT, DTPGH, and NKMD.

Belongs to the TRAFAC class translation factor GTPase superfamily. Classic translation factor GTPase family. EF-G/EF-2 subfamily.

The protein resides in the mitochondrion. The protein operates within protein biosynthesis; polypeptide chain elongation. Its function is as follows. Mitochondrial GTPase that catalyzes the GTP-dependent ribosomal translocation step during translation elongation. During this step, the ribosome changes from the pre-translocational (PRE) to the post-translocational (POST) state as the newly formed A-site-bound peptidyl-tRNA and P-site-bound deacylated tRNA move to the P and E sites, respectively. Catalyzes the coordinated movement of the two tRNA molecules, the mRNA and conformational changes in the ribosome. The protein is Elongation factor G, mitochondrial (mef1) of Aspergillus fumigatus (strain CBS 144.89 / FGSC A1163 / CEA10) (Neosartorya fumigata).